A 457-amino-acid polypeptide reads, in one-letter code: Siroheme synthase (457 aa).

The tract at residues 1-204 (MEIFPISLKL…DNLDIANQMM (204 aa)) is precorrin-2 dehydrogenase /sirohydrochlorin ferrochelatase. NAD(+) contacts are provided by residues 22-23 (HI) and 43-44 (PD). S129 is subject to Phosphoserine. Residues 216–457 (GEVYLVGAGP…VSLREQLQWL (242 aa)) are uroporphyrinogen-III C-methyltransferase. An S-adenosyl-L-methionine-binding site is contributed by P225. D248 serves as the catalytic Proton acceptor. K270 (proton donor) is an active-site residue. S-adenosyl-L-methionine-binding positions include 301–303 (GGD), I306, 331–332 (TA), M383, and G412.

The protein in the N-terminal section; belongs to the precorrin-2 dehydrogenase / sirohydrochlorin ferrochelatase family. It in the C-terminal section; belongs to the precorrin methyltransferase family.

The enzyme catalyses uroporphyrinogen III + 2 S-adenosyl-L-methionine = precorrin-2 + 2 S-adenosyl-L-homocysteine + H(+). It carries out the reaction precorrin-2 + NAD(+) = sirohydrochlorin + NADH + 2 H(+). The catalysed reaction is siroheme + 2 H(+) = sirohydrochlorin + Fe(2+). It participates in cofactor biosynthesis; adenosylcobalamin biosynthesis; precorrin-2 from uroporphyrinogen III: step 1/1. It functions in the pathway cofactor biosynthesis; adenosylcobalamin biosynthesis; sirohydrochlorin from precorrin-2: step 1/1. The protein operates within porphyrin-containing compound metabolism; siroheme biosynthesis; precorrin-2 from uroporphyrinogen III: step 1/1. Its pathway is porphyrin-containing compound metabolism; siroheme biosynthesis; siroheme from sirohydrochlorin: step 1/1. It participates in porphyrin-containing compound metabolism; siroheme biosynthesis; sirohydrochlorin from precorrin-2: step 1/1. Multifunctional enzyme that catalyzes the SAM-dependent methylations of uroporphyrinogen III at position C-2 and C-7 to form precorrin-2 via precorrin-1. Then it catalyzes the NAD-dependent ring dehydrogenation of precorrin-2 to yield sirohydrochlorin. Finally, it catalyzes the ferrochelation of sirohydrochlorin to yield siroheme. The sequence is that of Siroheme synthase from Acinetobacter baylyi (strain ATCC 33305 / BD413 / ADP1).